A 136-amino-acid polypeptide reads, in one-letter code: Histone H3.2 (136 aa).

The disordered stretch occupies residues 1–42 (MARTKQTARKSTGGKAPRKQLATKAARKSAPSAGGVKKPHRY). Lysine 5 carries the post-translational modification N6,N6,N6-trimethyllysine; alternate. N6,N6-dimethyllysine; alternate is present on lysine 5. 2 positions are modified to N6-methyllysine; alternate: lysine 5 and lysine 10. Lysine 10 is subject to N6-acetyllysine; alternate. At serine 11 the chain carries Phosphoserine. At lysine 15 the chain carries N6,N6-dimethyllysine; alternate. Lysine 15, lysine 19, lysine 24, lysine 28, and lysine 37 each carry N6-acetyllysine; alternate. 4 positions are modified to N6-methyllysine; alternate: lysine 19, lysine 24, lysine 28, and lysine 37. An N6,N6,N6-trimethyllysine; alternate mark is found at lysine 28 and lysine 37. 2 positions are modified to N6,N6-dimethyllysine; alternate: lysine 28 and lysine 37. 2 positions are modified to N6-acetyllysine: lysine 57 and lysine 65. Lysine 80 carries the post-translational modification N6,N6,N6-trimethyllysine; alternate. At lysine 80 the chain carries N6,N6-dimethyllysine; alternate. Residue lysine 80 is modified to N6-methyllysine; alternate.

Belongs to the histone H3 family. As to quaternary structure, the nucleosome is a histone octamer containing two molecules each of H2A, H2B, H3 and H4 assembled in one H3-H4 heterotetramer and two H2A-H2B heterodimers. The octamer wraps approximately 147 bp of DNA. In terms of processing, phosphorylated to form H3S10ph. H3S10ph promotes subsequent H3K14ac formation and is required for transcriptional activation through TBP recruitment to the promoters. Post-translationally, mono-, di- and trimethylated by the COMPASS complex to form H3K4me1/2/3. H3K4me activates gene expression by regulating transcription elongation and plays a role in telomere length maintenance. H3K4me enrichment correlates with transcription levels, and occurs in a 5' to 3' gradient with H3K4me3 enrichment at the 5'-end of genes, shifting to H3K4me2 and then H3K4me1. Methylated by SET2 to form H3K36me. H3K36me represses gene expression. Methylated by DOT1 to form H3K79me. H3K79me is required for association of SIR proteins with telomeric regions and for telomeric silencing. The COMPASS-mediated formation of H3K4me2/3 and the DOT1-mediated formation of H3K79me require H2BK123ub1. Acetylation of histone H3 leads to transcriptional activation. H3K14ac formation by GCN5 is promoted by H3S10ph. H3K14ac can also be formed by ESA1. H3K56ac formation occurs predominantly in newly synthesized H3 molecules during G1, S and G2/M of the cell cycle and may be involved in DNA repair.

It is found in the nucleus. Its subcellular location is the chromosome. Functionally, core component of nucleosome. Nucleosomes wrap and compact DNA into chromatin, limiting DNA accessibility to the cellular machineries which require DNA as a template. Histones thereby play a central role in transcription regulation, DNA repair, DNA replication and chromosomal stability. DNA accessibility is regulated via a complex set of post-translational modifications of histones, also called histone code, and nucleosome remodeling. The chain is Histone H3.2 (HHT2) from Mycosarcoma maydis (Corn smut fungus).